We begin with the raw amino-acid sequence, 480 residues long: Proline--tRNA ligase (480 aa).

This sequence belongs to the class-II aminoacyl-tRNA synthetase family. ProS type 3 subfamily. In terms of assembly, homodimer.

It localises to the cytoplasm. The enzyme catalyses tRNA(Pro) + L-proline + ATP = L-prolyl-tRNA(Pro) + AMP + diphosphate. Functionally, catalyzes the attachment of proline to tRNA(Pro) in a two-step reaction: proline is first activated by ATP to form Pro-AMP and then transferred to the acceptor end of tRNA(Pro). The polypeptide is Proline--tRNA ligase (Chloroflexus aurantiacus (strain ATCC 29364 / DSM 637 / Y-400-fl)).